Consider the following 305-residue polypeptide: Regulator of microtubule dynamics protein 1 (305 aa).

Lys160 carries the N6-succinyllysine modification. TPR repeat units follow at residues 163-199 and 217-253; these read AICI…NPKD and PWYQ…DPNF. Lys245 is modified (N6-succinyllysine).

The protein belongs to the RMDN family. In terms of assembly, interacts with microtubules.

The protein localises to the cytoplasm. Its subcellular location is the cytoskeleton. The protein resides in the spindle. It is found in the spindle pole. The protein is Regulator of microtubule dynamics protein 1 (Rmdn1) of Mus musculus (Mouse).